We begin with the raw amino-acid sequence, 165 residues long: Protein SprT (165 aa).

In terms of domain architecture, SprT-like spans 20–163 (EKLAQANLKL…RCVHCGEQLV (144 aa)). Histidine 78 is a Zn(2+) binding site. The active site involves glutamate 79. Histidine 82 is a Zn(2+) binding site.

Belongs to the SprT family. Zn(2+) serves as cofactor.

It localises to the cytoplasm. This chain is Protein SprT, found in Shigella sonnei (strain Ss046).